Here is a 183-residue protein sequence, read N- to C-terminus: Adenine phosphoribosyltransferase (183 aa).

This sequence belongs to the purine/pyrimidine phosphoribosyltransferase family. Homodimer.

The protein resides in the cytoplasm. It carries out the reaction AMP + diphosphate = 5-phospho-alpha-D-ribose 1-diphosphate + adenine. It participates in purine metabolism; AMP biosynthesis via salvage pathway; AMP from adenine: step 1/1. In terms of biological role, catalyzes a salvage reaction resulting in the formation of AMP, that is energically less costly than de novo synthesis. The chain is Adenine phosphoribosyltransferase from Shewanella sp. (strain MR-7).